The sequence spans 382 residues: MQDAAPRLTFTLRDEERLMMKIGVFVPIGNNGWLISTHAPQYMPTFELNKAIVQKAEHYHFDFALSMIKLRGFGGKTEFWDHNLESFTLMAGLAAVTSRIQIYATAATLTLPPAIVARMAATIDSISGGRFGVNLVTGWQKPEYEQMGIWPGDDYFSRRYDYLTEYVQVLRDLWGSGKSDFKGDFFTMDDCRVSPQPSVPMKVICAGQSDAGMAFSARYADFNFCFGKGVNTPTAFAPTAARMKQAAEQTGRDVGSYVLFMVIADETDDAARAKWEHYKAGADEEALSWLTEQSQKDTRSDTDTNVRQMADPTSAVNINMGTLVGSYASVARMLDEVASVPGAEGVLLTFDDFLSGIENFGERIQPLMQCRAHLPALTQEVA.

Residues 68-69, N134, E143, 159-160, and S209 each bind FMN; these read IK and RY.

This sequence belongs to the NtaA/SnaA/DszA monooxygenase family. RutA subfamily.

It catalyses the reaction uracil + FMNH2 + NADH + O2 = (Z)-3-ureidoacrylate + FMN + NAD(+) + H2O + H(+). The catalysed reaction is thymine + FMNH2 + NADH + O2 = (Z)-2-methylureidoacrylate + FMN + NAD(+) + H2O + H(+). In terms of biological role, catalyzes the pyrimidine ring opening between N-3 and C-4 by an unusual flavin hydroperoxide-catalyzed mechanism, adding oxygen atoms in the process to yield ureidoacrylate peracid, that immediately reacts with FMN forming ureidoacrylate and FMN-N(5)-oxide. The FMN-N(5)-oxide reacts spontaneously with NADH to produce FMN. Requires the flavin reductase RutF to regenerate FMN in vivo. The polypeptide is Pyrimidine monooxygenase RutA (Escherichia coli O81 (strain ED1a)).